The following is a 257-amino-acid chain: MLILVSPAKTLDFEQPPLTQVYSQPDFLTHSQELIQVCRQLTPSDIATLMKVSDKIAGLNAARFGEWQPDFSLDNAKQAIFAFRGDVYTGFDADSLSEDEIAQTQSQLRILSGLYGLLRPLDLIMPYRLEMGTALSNPKGKNLYEFWGDTLTQAVNEALAESGSDIIVNLASNEYFKAIKPKKLQGQLISPVFKDCKNGQYKVISFFAKRARGMMARYIITNKVNTLAELKAFNLAGYYYSEEQSSPTNPTFLREEQ.

The protein belongs to the UPF0246 family.

The sequence is that of UPF0246 protein Sbal223_3241 from Shewanella baltica (strain OS223).